A 421-amino-acid chain; its full sequence is Osmoprotective compounds-binding protein GgtB (421 aa).

The signal sequence occupies residues 1–18; that stretch reads MKFFKITTLIISLIVLTS. C19 is lipidated: N-palmitoyl cysteine. Residue C19 is the site of S-diacylglycerol cysteine attachment.

Belongs to the bacterial solute-binding protein 1 family. As to quaternary structure, the complex is composed of two ATP-binding proteins (GgtA), two transmembrane proteins (GgtC and GgtD) and a solute-binding protein (GgtB).

The protein resides in the cell membrane. Part of the ABC transporter complex GgtABCD involved in the uptake of the osmoprotective compounds glucosylglycerol (GG), sucrose and trehalose. Binds glucosylglycerol and exhibits a somewhat lower affinity towards sucrose and a substantially lower affinity towards trehalose. The protein is Osmoprotective compounds-binding protein GgtB of Synechocystis sp. (strain ATCC 27184 / PCC 6803 / Kazusa).